Reading from the N-terminus, the 401-residue chain is MGRAKRVVLAYSGGVDTSVCIPYLKQEWGVEEVITLAADLGQGDELGPIQEKALRCGAIESLVVNAQEEFVKEYAFPSIQANALYENRYPLSTALARPLIAKLLVEAAEKYGADAVSHGCTGKGNDQVRFDVGIMALNPSLKVLAPAREWGMSREETIAYGEKFGIESPVKKSSPFSIDRNLLGRSIEAGPLEDPMTEPPEEIYLMTKAIADTPNEPEYVDIGFNQGIPVSLNGENLAPVTLISQLNDLVGKHGVGRLDMIENRVVGIKSREIYEAPALLVLIDAHRDLESLTLTGDVTQYKRGIEDTYGQLIYKGLWYSPLKEAIDAFILKTQEQVTGSVRVKLFKGNAKVVGRQSVNSIYSPDLATYGAEDQFDHKAAEGFIYVWGLPSKVWAEKTRGK.

Residues Ala-10–Ser-18 and Ala-38 contribute to the ATP site. Tyr-89 contacts L-citrulline. Position 119 (Gly-119) interacts with ATP. Positions 121, 125, and 126 each coordinate L-aspartate. Residue Asn-125 participates in L-citrulline binding. 5 residues coordinate L-citrulline: Arg-129, Ser-177, Ser-186, Glu-262, and Tyr-274.

Belongs to the argininosuccinate synthase family. Type 1 subfamily. As to quaternary structure, homotetramer.

It localises to the cytoplasm. It catalyses the reaction L-citrulline + L-aspartate + ATP = 2-(N(omega)-L-arginino)succinate + AMP + diphosphate + H(+). The protein operates within amino-acid biosynthesis; L-arginine biosynthesis; L-arginine from L-ornithine and carbamoyl phosphate: step 2/3. This Microcystis aeruginosa (strain NIES-843 / IAM M-2473) protein is Argininosuccinate synthase.